The chain runs to 379 residues: Dihydroflavonol 4-reductase (379 aa).

NADP(+)-binding residues include Lys-56 and Tyr-175.

It belongs to the NAD(P)-dependent epimerase/dehydratase family. Dihydroflavonol-4-reductase subfamily. As to expression, expressed in both leaf and hypocotyl tissues.

The enzyme catalyses a (2R,3S,4S)-leucoanthocyanidin + NADP(+) = a (2R,3R)-dihydroflavonol + NADPH + H(+). It catalyses the reaction (2S)-flavan-4-ol + NADP(+) = (2S)-flavanone + NADPH + H(+). The protein operates within pigment biosynthesis; anthocyanin biosynthesis. Bifunctional enzyme involved in flavonoid metabolism. This Solanum lycopersicum (Tomato) protein is Dihydroflavonol 4-reductase.